We begin with the raw amino-acid sequence, 62 residues long: Bacteriocin pediocin PA-1 (62 aa).

A propeptide spanning residues 1–18 (MKKIEKLTEKEMANIIGG) is cleaved from the precursor. 2 cysteine pairs are disulfide-bonded: C27–C32 and C42–C62. The tract at residues 40-52 (TTCIINNGAMAWA) is hydrophobic.

It belongs to the bacteriocin class IIA/YGNGV family.

It localises to the secreted. Functionally, bactericidal activity (effective inhibitor of L.monocytogenes). In Pediococcus acidilactici, this protein is Bacteriocin pediocin PA-1 (pedA).